Consider the following 143-residue polypeptide: NADH-quinone oxidoreductase subunit A (143 aa).

The next 3 helical transmembrane spans lie at 12–32 (YIVG…FLGG), 61–81 (FYLI…LYIW), and 90–110 (WIGF…LIYA).

It belongs to the complex I subunit 3 family. As to quaternary structure, NDH-1 is composed of 13 different subunits. Subunits NuoA, H, J, K, L, M, N constitute the membrane sector of the complex.

The protein resides in the cell inner membrane. The catalysed reaction is a quinone + NADH + 5 H(+)(in) = a quinol + NAD(+) + 4 H(+)(out). Its function is as follows. NDH-1 shuttles electrons from NADH, via FMN and iron-sulfur (Fe-S) centers, to quinones in the respiratory chain. The immediate electron acceptor for the enzyme in this species is believed to be ubiquinone. Couples the redox reaction to proton translocation (for every two electrons transferred, four hydrogen ions are translocated across the cytoplasmic membrane), and thus conserves the redox energy in a proton gradient. This is NADH-quinone oxidoreductase subunit A from Blochmanniella floridana.